We begin with the raw amino-acid sequence, 53 residues long: UPF0391 membrane protein ETA_06630 (53 aa).

The next 2 membrane-spanning stretches (helical) occupy residues 4-24 (WGII…GGLA) and 27-47 (AAWA…ISLF).

This sequence belongs to the UPF0391 family.

It is found in the cell membrane. The sequence is that of UPF0391 membrane protein ETA_06630 from Erwinia tasmaniensis (strain DSM 17950 / CFBP 7177 / CIP 109463 / NCPPB 4357 / Et1/99).